The following is a 613-amino-acid chain: Chaperone protein DnaK (613 aa).

Thr173 is subject to Phosphothreonine; by autocatalysis. The disordered stretch occupies residues 577-613; sequence AKQAQAQQEGGAEGAQKADDNVVDAEYEEVNDDQEKK. Residues 597–613 are compositionally biased toward acidic residues; sequence NVVDAEYEEVNDDQEKK.

This sequence belongs to the heat shock protein 70 family.

Its function is as follows. Acts as a chaperone. The polypeptide is Chaperone protein DnaK (Bacillus pumilus (strain SAFR-032)).